The chain runs to 207 residues: LexA repressor (207 aa).

The H-T-H motif DNA-binding region spans 29 to 49; it reads VREICSAVDLSSTSTVHGHLA. Residues Ser-128 and Lys-166 each act as for autocatalytic cleavage activity in the active site.

Belongs to the peptidase S24 family. Homodimer.

The catalysed reaction is Hydrolysis of Ala-|-Gly bond in repressor LexA.. Functionally, represses a number of genes involved in the response to DNA damage (SOS response), including recA and lexA. In the presence of single-stranded DNA, RecA interacts with LexA causing an autocatalytic cleavage which disrupts the DNA-binding part of LexA, leading to derepression of the SOS regulon and eventually DNA repair. The sequence is that of LexA repressor from Lactobacillus gasseri (strain ATCC 33323 / DSM 20243 / BCRC 14619 / CIP 102991 / JCM 1131 / KCTC 3163 / NCIMB 11718 / NCTC 13722 / AM63).